The sequence spans 247 residues: MKFLVDVHAHTIASTHAYSTVHDYLAVAKEKGIKLFAITDHGPDMADAPHFWHFVNMRVLPRIVDGIGVLRGIEANIKNENGDIDFFGSYLNELDIVLAGFHEPVFQPSTQTTHTQALVNCIESGNVDIISHPGNPAYPIDIKRVAEVAATHNVALEINNSSFLTSRKGSLKNCTAIARAVKEAGGYLVLGSDSHVAFSLGGFDKAIELIQEVDFPIERILNHSPKALLEFLTSRGHKGMDEYAEIV.

Residues H8, H10, H16, H41, E74, H102, H132, D193, and H195 each contribute to the Zn(2+) site.

The protein belongs to the PHP family. Zn(2+) serves as cofactor.

In Shewanella loihica (strain ATCC BAA-1088 / PV-4), this protein is Probable phosphatase Shew_1420.